A 25-amino-acid polypeptide reads, in one-letter code: Alanine racemase (25 aa).

This sequence belongs to the alanine racemase family. In terms of assembly, homodimer. The cofactor is pyridoxal 5'-phosphate.

It catalyses the reaction L-alanine = D-alanine. The protein operates within amino-acid biosynthesis; D-alanine biosynthesis; D-alanine from L-alanine: step 1/1. Its function is as follows. Catalyzes the interconversion of L-alanine and D-alanine. This chain is Alanine racemase, found in Pseudomonas fluorescens.